A 305-amino-acid chain; its full sequence is Superkiller complex protein 8 (305 aa).

The residue at position 1 (Met1) is an N-acetylmethionine. Thr2 carries the post-translational modification N-acetylthreonine; in WD repeat-containing protein 61, N-terminally processed. WD repeat units lie at residues 14–57 (AHDD…LELQ), 62–101 (GHQL…QMKS), 104–143 (AGPV…KEYS), 146–187 (TRGK…HTLE), 188–227 (GHAM…LAGT), 230–269 (GHAS…CIHT), and 272–305 (DHQD…DCPI).

It belongs to the SKI8 family. Component of the PAF1 complex, which consists of CDC73, PAF1, LEO1, CTR9, RTF1 and SKIC8. The PAF1 complex interacts with PHF5A. Within the PAF1 complex interacts directly with PHF5A. Component of the SKI complex which consists of SKIC2, SKIC3 and SKIC8.

It localises to the nucleus. The protein localises to the cytoplasm. Its function is as follows. Component of the PAF1 complex (PAF1C) which has multiple functions during transcription by RNA polymerase II and is implicated in regulation of development and maintenance of embryonic stem cell pluripotency. PAF1C associates with RNA polymerase II through interaction with POLR2A CTD non-phosphorylated and 'Ser-2'- and 'Ser-5'-phosphorylated forms and is involved in transcriptional elongation, acting both independently and synergistically with TCEA1 and in cooperation with the DSIF complex and HTATSF1. PAF1C is required for transcription of Hox and Wnt target genes. PAF1C is involved in hematopoiesis and stimulates transcriptional activity of KMT2A/MLL1; it promotes leukemogenesis through association with KMT2A/MLL1-rearranged oncoproteins, such as KMT2A/MLL1-MLLT3/AF9 and KMT2A/MLL1-MLLT1/ENL. PAF1C is involved in histone modifications such as ubiquitination of histone H2B and methylation on histone H3 'Lys-4' (H3K4me3). PAF1C recruits the RNF20/40 E3 ubiquitin-protein ligase complex and the E2 enzyme UBE2A or UBE2B to chromatin which mediate monoubiquitination of 'Lys-120' of histone H2B (H2BK120ub1); UB2A/B-mediated H2B ubiquitination is proposed to be coupled to transcription. PAF1C is involved in mRNA 3' end formation probably through association with cleavage and poly(A) factors. In case of infection by influenza A strain H3N2, PAF1C associates with viral NS1 protein, thereby regulating gene transcription. Required for mono- and trimethylation on histone H3 'Lys-4' (H3K4me3), dimethylation on histone H3 'Lys-79' (H3K4me3). Required for Hox gene transcription. Also acts as a component of the SKI complex, a multiprotein complex that assists the RNA-degrading exosome during the mRNA decay and quality-control pathways. The SKI complex catalyzes mRNA extraction from 80S ribosomal complexes in the 3'-5' direction and channels mRNA to the cytosolic exosome for degradation. SKI-mediated extraction of mRNA from stalled ribosomes allow binding of the Pelota-HBS1L complex and subsequent ribosome disassembly by ABCE1 for ribosome recycling. This chain is Superkiller complex protein 8 (Skic8), found in Mus musculus (Mouse).